Reading from the N-terminus, the 1059-residue chain is Putative ATP-dependent RNA helicase BoYb (1059 aa).

Residues 54–82 carry the Q motif motif; it reads RRFAEVSLLPDILETMRNLGLNRLLRLQS. One can recognise a Helicase ATP-binding domain in the interval 87–284; the sequence is HLAGGSGHGA…RAVNDKPALV (198 aa). An ATP-binding site is contributed by 100–107; it reads GSPASGRT. Residues 230-233 carry the DEAD box motif; it reads DDVD. A Tudor domain is found at 575–639; sequence PPVAGAICMY…GKLFECPEAL (65 aa). A disordered region spans residues 756-787; it reads VQDSKEKANSKPHEKMKGKMTDQPAKLQSQPP. The span at 757 to 775 shows a compositional bias: basic and acidic residues; it reads QDSKEKANSKPHEKMKGKM.

The protein localises to the cytoplasm. It catalyses the reaction ATP + H2O = ADP + phosphate + H(+). In terms of biological role, involved in primary piRNA biogenesis in germline cells. The chain is Putative ATP-dependent RNA helicase BoYb (BoYb) from Drosophila melanogaster (Fruit fly).